The primary structure comprises 398 residues: Elongation factor Tu (398 aa).

Residues 10–207 form the tr-type G domain; the sequence is KPHVNIGTIG…TVDEYIPEPE (198 aa). Residues 19-26 are G1; it reads GHVDHGKT. Position 19-26 (19-26) interacts with GTP; that stretch reads GHVDHGKT. Threonine 26 lines the Mg(2+) pocket. The segment at 63–67 is G2; it reads GITIN. The segment at 84 to 87 is G3; it reads DAPG. Residues 84-88 and 139-142 each bind GTP; these read DAPGH and NKVD. The interval 139 to 142 is G4; it reads NKVD. Positions 177 to 179 are G5; that stretch reads SAL.

This sequence belongs to the TRAFAC class translation factor GTPase superfamily. Classic translation factor GTPase family. EF-Tu/EF-1A subfamily. Monomer.

The protein resides in the cytoplasm. It catalyses the reaction GTP + H2O = GDP + phosphate + H(+). GTP hydrolase that promotes the GTP-dependent binding of aminoacyl-tRNA to the A-site of ribosomes during protein biosynthesis. The protein is Elongation factor Tu of Streptococcus sanguinis (strain SK36).